The primary structure comprises 183 residues: ATP synthase subunit delta (183 aa).

This sequence belongs to the ATPase delta chain family. In terms of assembly, F-type ATPases have 2 components, F(1) - the catalytic core - and F(0) - the membrane proton channel. F(1) has five subunits: alpha(3), beta(3), gamma(1), delta(1), epsilon(1). CF(0) has four main subunits: a(1), b(1), b'(1) and c(10-14). The alpha and beta chains form an alternating ring which encloses part of the gamma chain. F(1) is attached to F(0) by a central stalk formed by the gamma and epsilon chains, while a peripheral stalk is formed by the delta, b and b' chains.

It localises to the cellular thylakoid membrane. Functionally, f(1)F(0) ATP synthase produces ATP from ADP in the presence of a proton or sodium gradient. F-type ATPases consist of two structural domains, F(1) containing the extramembraneous catalytic core and F(0) containing the membrane proton channel, linked together by a central stalk and a peripheral stalk. During catalysis, ATP synthesis in the catalytic domain of F(1) is coupled via a rotary mechanism of the central stalk subunits to proton translocation. This protein is part of the stalk that links CF(0) to CF(1). It either transmits conformational changes from CF(0) to CF(1) or is implicated in proton conduction. The protein is ATP synthase subunit delta of Trichormus variabilis (strain ATCC 29413 / PCC 7937) (Anabaena variabilis).